We begin with the raw amino-acid sequence, 172 residues long: Dehydratase cfoI (172 aa).

Residues His86 and His111 contribute to the active site.

It belongs to the scytalone dehydratase family. In terms of assembly, homotrimer. Each subunit contains an active site, located in the central part of the hydrophobic core of the monomer, which functions independently.

Its pathway is secondary metabolite biosynthesis; flavonoid biosynthesis. In terms of biological role, cytochrome P450 monooxygenase; part of the gene cluster that mediates the biosynthesis of chlorflavonin, a fungal flavonoid with acetolactate synthase inhibitory activity. Within the pathway, cfoI is responsible for the hydroxylation of the flavonoid skeleton at position C3 with cfoF. The pathway begins with the PKS-NRPS hybrid synthetase cfoA that uses benzoic acid or p-hydroxybenzoic acid as a starter unit with four rounds of chain elongation using malonyl-CoA to form the chalcone skeleton. Then, a new type of chalcone isomerase, cfoK, catalyzes the conversion of the chalcone into a flavanone by a histidine-mediated oxa-Michael addition mechanism. The desaturation of flavanone to flavone is catalyzed by a new type of flavone synthase, the flavin mononucleotide (FMN)-dependent oxidoreductase cfoJ. Monooxygenases cfoF, cfoG, and P450 cfoH are responsible for the hydroxylation of the flavonoid skeleton at sites C3, C8, and C2', respectively. Like cfoF, the dehydratase cfoI plays also a role in the hydroxylation of position C3. Methyltransferases cfoB, cfoC, and cfoD then catalyze the methylation of C7-OH, C8-OH, and C3-OH, respectively. Finally, the monooxygenase cfoE is responsible for the chlorination of flavonoid at position C3'. The polypeptide is Dehydratase cfoI (Aspergillus candidus).